The following is a 187-amino-acid chain: Elongation factor P (187 aa).

This sequence belongs to the elongation factor P family.

Its subcellular location is the cytoplasm. Its pathway is protein biosynthesis; polypeptide chain elongation. Involved in peptide bond synthesis. Stimulates efficient translation and peptide-bond synthesis on native or reconstituted 70S ribosomes in vitro. Probably functions indirectly by altering the affinity of the ribosome for aminoacyl-tRNA, thus increasing their reactivity as acceptors for peptidyl transferase. This chain is Elongation factor P, found in Zymomonas mobilis subsp. mobilis (strain ATCC 31821 / ZM4 / CP4).